Reading from the N-terminus, the 218-residue chain is Glutathione S-transferase Mu 1 (218 aa).

Residues 2 to 88 (PMILGYWNVR…YLARKHHLCG (87 aa)) form the GST N-terminal domain. Glutathione contacts are provided by residues 7–8 (YW), 43–46 (RSQW), Lys-50, and 59–60 (NL). Ser-67 is modified (phosphoserine). 72-73 (QS) provides a ligand contact to glutathione. One can recognise a GST C-terminal domain in the interval 90 to 208 (TEEERIRADI…KSSRYLSTPI (119 aa)). Substrate is bound at residue Tyr-116. 2 positions are modified to phosphoserine: Ser-205 and Ser-210.

The protein belongs to the GST superfamily. Mu family. As to quaternary structure, homodimer or heterodimer.

The protein resides in the cytoplasm. The catalysed reaction is RX + glutathione = an S-substituted glutathione + a halide anion + H(+). The enzyme catalyses prostaglandin A2 + glutathione = prostaglandin A2-S-(R)-glutathione. It catalyses the reaction prostaglandin J2 + glutathione = prostaglandin J2-S-(R)-glutathione. It carries out the reaction prostaglandin J2 + glutathione = prostaglandin J2-S-(S)-glutathione. The catalysed reaction is prostaglandin A2 + glutathione = prostaglandin A2-S-(S)-glutathione. The enzyme catalyses 11(S)-hydroxy-14(S),15(S)-epoxy-(5Z,8Z,12E)-eicosatrienoate + glutathione = (11S,15S)-dihydroxy-14(R)-S-glutathionyl-(5Z,8Z,12E)-eicosatrienoate. Its function is as follows. Conjugation of reduced glutathione to a wide number of exogenous and endogenous hydrophobic electrophiles. The olfactory GST may be crucial for the acuity of the olfactory process. Participates in the formation of novel hepoxilin regioisomers. This is Glutathione S-transferase Mu 1 from Rattus norvegicus (Rat).